The sequence spans 527 residues: Amine oxidase [flavin-containing] A (527 aa).

Methionine 1 is subject to N-acetylmethionine. Topologically, residues 1–497 are cytoplasmic; that stretch reads MESLQKTSDA…PSFWERNLPS (497 aa). The residue at position 383 (serine 383) is a Phosphoserine. Residue cysteine 406 is modified to S-8alpha-FAD cysteine. The helical; Anchor for type IV membrane protein transmembrane segment at 498–518 threads the bilayer; the sequence is VSGLLKIVGFSTSITALWFVM. Residues 519–527 are Mitochondrial intermembrane-facing; the sequence is YRFRLLSRS. An interaction with membrane phospholipid headgroups region spans residues 520 to 522; it reads RFR.

The protein belongs to the flavin monoamine oxidase family. In terms of assembly, monomer, homo- or heterodimer (containing two subunits of similar size). Each subunit contains a covalently bound flavin. Enzymatically active as monomer. It depends on FAD as a cofactor.

It is found in the mitochondrion outer membrane. It catalyses the reaction a secondary aliphatic amine + O2 + H2O = a primary amine + an aldehyde + H2O2. The enzyme catalyses a primary methyl amine + O2 + H2O = an aldehyde + H2O2 + NH4(+). It carries out the reaction (R)-adrenaline + O2 + H2O = (R)-3,4-dihydroxymandelaldehyde + methylamine + H2O2. The catalysed reaction is dopamine + O2 + H2O = 3,4-dihydroxyphenylacetaldehyde + H2O2 + NH4(+). It catalyses the reaction tyramine + O2 + H2O = (4-hydroxyphenyl)acetaldehyde + H2O2 + NH4(+). The enzyme catalyses (R)-noradrenaline + O2 + H2O = (R)-3,4-dihydroxymandelaldehyde + H2O2 + NH4(+). It carries out the reaction serotonin + O2 + H2O = (5-hydroxyindol-3-yl)acetaldehyde + H2O2 + NH4(+). The catalysed reaction is kynuramine + O2 + H2O = 3-(2-aminophenyl)-3-oxopropanal + H2O2 + NH4(+). It catalyses the reaction tryptamine + O2 + H2O = indole-3-acetaldehyde + H2O2 + NH4(+). The enzyme catalyses 2-phenylethylamine + O2 + H2O = 2-phenylacetaldehyde + H2O2 + NH4(+). Catalyzes the oxidative deamination of primary and some secondary amine such as neurotransmitters, with concomitant reduction of oxygen to hydrogen peroxide and has important functions in the metabolism of neuroactive and vasoactive amines in the central nervous system and peripheral tissues. Preferentially oxidizes serotonin. Also catalyzes the oxidative deamination of kynuramine to 3-(2-aminophenyl)-3-oxopropanal that can spontaneously condense to 4-hydroxyquinoline. This chain is Amine oxidase [flavin-containing] A, found in Bos taurus (Bovine).